Consider the following 459-residue polypeptide: Ribulose bisphosphate carboxylase large chain (459 aa).

K4 is subject to N6,N6,N6-trimethyllysine. 2 residues coordinate substrate: N113 and T163. K165 serves as the catalytic Proton acceptor. K167 lines the substrate pocket. The Mg(2+) site is built by K191, D193, and E194. K191 carries the post-translational modification N6-carboxylysine. The active-site Proton acceptor is H284. The substrate site is built by R285, H317, and S369.

The protein belongs to the RuBisCO large chain family. Type I subfamily. Heterohexadecamer of 8 large chains and 8 small chains; disulfide-linked. The disulfide link is formed within the large subunit homodimers. Mg(2+) is required as a cofactor. Post-translationally, the disulfide bond which can form in the large chain dimeric partners within the hexadecamer appears to be associated with oxidative stress and protein turnover.

The protein localises to the plastid. It is found in the chloroplast. It carries out the reaction 2 (2R)-3-phosphoglycerate + 2 H(+) = D-ribulose 1,5-bisphosphate + CO2 + H2O. The enzyme catalyses D-ribulose 1,5-bisphosphate + O2 = 2-phosphoglycolate + (2R)-3-phosphoglycerate + 2 H(+). Functionally, ruBisCO catalyzes two reactions: the carboxylation of D-ribulose 1,5-bisphosphate, the primary event in carbon dioxide fixation, as well as the oxidative fragmentation of the pentose substrate in the photorespiration process. Both reactions occur simultaneously and in competition at the same active site. The sequence is that of Ribulose bisphosphate carboxylase large chain from Nyssa ogeche (Ogeechee tupelo).